The sequence spans 200 residues: Small ribosomal subunit protein uS4 (200 aa).

The tract at residues 21-42 (GTGKELQKRPYPPGQHGPGQRR) is disordered. One can recognise an S4 RNA-binding domain in the interval 92–155 (SRLDNLVYRL…RNLQVIKEAI (64 aa)).

It belongs to the universal ribosomal protein uS4 family. As to quaternary structure, part of the 30S ribosomal subunit. Contacts protein S5. The interaction surface between S4 and S5 is involved in control of translational fidelity.

Functionally, one of the primary rRNA binding proteins, it binds directly to 16S rRNA where it nucleates assembly of the body of the 30S subunit. With S5 and S12 plays an important role in translational accuracy. In Geobacillus thermodenitrificans (strain NG80-2), this protein is Small ribosomal subunit protein uS4.